The following is a 203-amino-acid chain: Cardiotrophin-1 (203 aa).

The protein belongs to the IL-6 superfamily. Highly expressed in heart, skeletal muscle, liver, lung and kidney. Lower levels in testis and brain. No expression in spleen.

It is found in the secreted. Functionally, induces cardiac myocyte hypertrophy in vitro. Binds to and activates the ILST/gp130 receptor. This chain is Cardiotrophin-1 (Ctf1), found in Mus musculus (Mouse).